A 605-amino-acid polypeptide reads, in one-letter code: MRPKKDGLEDFLRLTPEIKKQLGSLVSDYCNVLNKEFTAGSVEITLRSYKICKAFINEAKAHGREWGGLMATLNICNFWAILRNNRVRRRAENAGNDACSIACPIVMRYVLDHLIVVTDRFFIQAPSNRVMIPATIGTAMYKLLKHSRVRAYTYSKVLGVDRAAIMASGKQVVEHLNRMEKEGLLSSKFKAFCKWVFTYPVLEEMFQTMVSSKTGHLTDDVKDVRALIKTLPRASYSSHAGQRSYVSGVLPACLLSTKSKAVETPILVSGADRMDEELMGNDGGASHTEARYSESGQFHAFTDELESLPSPTMPLKPGAQSADCGDSSSSSSDSGNSDTEQSEREEARAEAPRLRAPKSRRTSRPNRGQTPCPSNAAEPEQPWIAAVHQESDERPIFPHPSKPTFLPPVKRKKGLRDSREGMFLPKPEAGSAISDVFEGREVCQPKRIRPFHPPGSPWANRPLPASLAPTPTGPVHEPVGSLTPAPVPQPLDPAPAVTPEASHLLEDPDEETSQAVKALREMADTVIPQKEEAAICGQMDLSHPPPRGHLDELTTTLESMTEDLNLDSPLTPELNEILDTFLNDECLLHAMHISTGLSIFDTSLF.

Disordered regions lie at residues 307–380 and 447–499; these read SLPS…AEPE and RIRP…AVTP. Low complexity predominate over residues 321 to 338; that stretch reads SADCGDSSSSSSDSGNSD. Residues 341-353 are compositionally biased toward basic and acidic residues; that stretch reads QSEREEARAEAPR. The span at 355 to 364 shows a compositional bias: basic residues; sequence RAPKSRRTSR.

Belongs to the herpesviridae Rta family. In terms of assembly, interacts with human ATF7IP protein, leading to promote and regulate host genes in virus-infected cells. Interacts with RNA polymerase III complex; this interaction downregulates small RNA transcription and 5'-pppRNA production.

The protein localises to the host nucleus. Its subcellular location is the virion tegument. Functionally, immediate-early transcription factor that controls the initiation of viral lytic gene expression and lytic reactivation from latency. Triggers lytic replication, and initiates a cellular senescence program in epithelial cells. Up-regulates human DCR3/TNFRSF6B by directly binding to its receptor. Globally induces a proteasome-dependent loss of SUMOylated proteins in the host cell and the loss of promeylocytic leukemia nuclear bodies. Improves the stability of the triplex capsid protein TRX1 by reducing the ubiquitination level of the latter. Mediates evasion of inflammasome activation and antiviral responses (T- and NK cell activation) during EBV early lytic infection. The sequence is that of Replication and transcription activator from Epstein-Barr virus (strain B95-8) (HHV-4).